The chain runs to 424 residues: Serine--tRNA ligase 1 (424 aa).

232–234 (TAE) contacts L-serine. Position 263–265 (263–265 (RSE)) interacts with ATP. Residue E286 participates in L-serine binding. 350-353 (EISS) contacts ATP. S386 is an L-serine binding site.

It belongs to the class-II aminoacyl-tRNA synthetase family. Type-1 seryl-tRNA synthetase subfamily. In terms of assembly, homodimer. The tRNA molecule binds across the dimer.

It is found in the cytoplasm. The enzyme catalyses tRNA(Ser) + L-serine + ATP = L-seryl-tRNA(Ser) + AMP + diphosphate + H(+). It catalyses the reaction tRNA(Sec) + L-serine + ATP = L-seryl-tRNA(Sec) + AMP + diphosphate + H(+). Its pathway is aminoacyl-tRNA biosynthesis; selenocysteinyl-tRNA(Sec) biosynthesis; L-seryl-tRNA(Sec) from L-serine and tRNA(Sec): step 1/1. Functionally, catalyzes the attachment of serine to tRNA(Ser). Is also able to aminoacylate tRNA(Sec) with serine, to form the misacylated tRNA L-seryl-tRNA(Sec), which will be further converted into selenocysteinyl-tRNA(Sec). This is Serine--tRNA ligase 1 from Clostridium acetobutylicum (strain ATCC 824 / DSM 792 / JCM 1419 / IAM 19013 / LMG 5710 / NBRC 13948 / NRRL B-527 / VKM B-1787 / 2291 / W).